We begin with the raw amino-acid sequence, 152 residues long: HTH-type transcriptional regulator SlrR (152 aa).

The region spanning I6–L61 is the HTH cro/C1-type domain. The H-T-H motif DNA-binding region spans I17 to R36. The Sin domain maps to Y113–G151.

In terms of assembly, component of the SlrR/SlrA complex.

Functionally, represses sigma(D)-dependent flagellar genes and activate the eps and yqxM operons. Repressor activity is regulated by SlrA. Controls the initiation of biofilm formation. The sequence is that of HTH-type transcriptional regulator SlrR (slrR) from Bacillus subtilis (strain 168).